We begin with the raw amino-acid sequence, 271 residues long: ATP synthase subunit a (271 aa).

The next 5 helical transmembrane spans lie at 40-60, 100-120, 146-166, 220-240, and 242-262; these read TINIDSMFFSVVLGLLFLVLF, LIAPLALTIFVWVFLMNLMDL, DVNVTLSMALGVFILILFYSI, LIFILIAGLLPWWSQWILNVP, and AIFHILIITLQAFIFMVLTIV.

This sequence belongs to the ATPase A chain family. F-type ATPases have 2 components, CF(1) - the catalytic core - and CF(0) - the membrane proton channel. CF(1) has five subunits: alpha(3), beta(3), gamma(1), delta(1), epsilon(1). CF(0) has three main subunits: a(1), b(2) and c(9-12). The alpha and beta chains form an alternating ring which encloses part of the gamma chain. CF(1) is attached to CF(0) by a central stalk formed by the gamma and epsilon chains, while a peripheral stalk is formed by the delta and b chains.

Its subcellular location is the cell inner membrane. Its function is as follows. Key component of the proton channel; it plays a direct role in the translocation of protons across the membrane. In Escherichia coli O1:K1 / APEC, this protein is ATP synthase subunit a.